The primary structure comprises 160 residues: Phosphopantetheine adenylyltransferase (160 aa).

Residue S9 coordinates substrate. Residues 9–10 (SF) and H17 contribute to the ATP site. The substrate site is built by K41, V73, and K87. ATP is bound by residues 88–90 (GLR), E98, and 122–128 (YSFVSSS).

Belongs to the bacterial CoaD family. In terms of assembly, homohexamer. Mg(2+) is required as a cofactor.

The protein resides in the cytoplasm. The catalysed reaction is (R)-4'-phosphopantetheine + ATP + H(+) = 3'-dephospho-CoA + diphosphate. Its pathway is cofactor biosynthesis; coenzyme A biosynthesis; CoA from (R)-pantothenate: step 4/5. Functionally, reversibly transfers an adenylyl group from ATP to 4'-phosphopantetheine, yielding dephospho-CoA (dPCoA) and pyrophosphate. This chain is Phosphopantetheine adenylyltransferase, found in Mycobacterium avium (strain 104).